A 180-amino-acid chain; its full sequence is Protein GrpE (180 aa).

A compositionally biased stretch (basic and acidic residues) spans 1-19 (MAEKKRAQEQEKVQEDQKM). Residues 1–25 (MAEKKRAQEQEKVQEDQKMQNEQNE) are disordered.

The protein belongs to the GrpE family. Homodimer.

The protein resides in the cytoplasm. Functionally, participates actively in the response to hyperosmotic and heat shock by preventing the aggregation of stress-denatured proteins, in association with DnaK and GrpE. It is the nucleotide exchange factor for DnaK and may function as a thermosensor. Unfolded proteins bind initially to DnaJ; upon interaction with the DnaJ-bound protein, DnaK hydrolyzes its bound ATP, resulting in the formation of a stable complex. GrpE releases ADP from DnaK; ATP binding to DnaK triggers the release of the substrate protein, thus completing the reaction cycle. Several rounds of ATP-dependent interactions between DnaJ, DnaK and GrpE are required for fully efficient folding. The chain is Protein GrpE from Nitratiruptor sp. (strain SB155-2).